Consider the following 401-residue polypeptide: Serine/threonine transporter SstT (401 aa).

8 helical membrane passes run 17–37 (IGIG…ITVI), 40–60 (FGSL…LTLV), 78–98 (VICL…GASY), 138–158 (ALAT…GLAF), 179–199 (VVGW…FDTI), 212–232 (LLLL…NPLI), 295–315 (MAGA…TLGI), and 336–356 (ASGV…LFGI).

The protein belongs to the dicarboxylate/amino acid:cation symporter (DAACS) (TC 2.A.23) family.

The protein resides in the cell membrane. The enzyme catalyses L-serine(in) + Na(+)(in) = L-serine(out) + Na(+)(out). It catalyses the reaction L-threonine(in) + Na(+)(in) = L-threonine(out) + Na(+)(out). In terms of biological role, involved in the import of serine and threonine into the cell, with the concomitant import of sodium (symport system). The protein is Serine/threonine transporter SstT of Streptococcus suis (strain 98HAH33).